The chain runs to 86 residues: Small ribosomal subunit protein bS16 (86 aa).

It belongs to the bacterial ribosomal protein bS16 family.

This chain is Small ribosomal subunit protein bS16, found in Xylella fastidiosa (strain M12).